We begin with the raw amino-acid sequence, 213 residues long: Cytochrome b6 (213 aa).

The helical transmembrane segment at 30–50 (IFYCLGGLTLLAFLVQCVTGL) threads the bilayer. C33 is a heme c binding site. 2 residues coordinate heme b: H84 and H98. The next 3 membrane-spanning stretches (helical) occupy residues 88–108 (ANLM…TGSF), 114–134 (LNWL…FTGY), and 184–204 (LHVM…FIMI). Heme b-binding residues include H185 and H200.

Belongs to the cytochrome b family. PetB subfamily. The subunits of the cytochrome bc complex are a Rieske Fe-S protein (PetC), cytochrome b6 (PetB), subunit IV (PetD), and a diheme cytochrome c (PetX). Heme b serves as cofactor. Heme c is required as a cofactor.

The protein localises to the cell membrane. Component of the cytochrome bc complex which donates electrons to the photosynthetic reaction center. The chain is Cytochrome b6 from Heliobacterium mobile (Heliobacillus mobilis).